The chain runs to 168 residues: Cytochrome c-type biogenesis protein CcmE (168 aa).

The Cytoplasmic segment spans residues 1-7 (MTRKQRR). Residues 8-28 (LMLIGVCGAVLAVALGLVLWA) traverse the membrane as a helical; Signal-anchor for type II membrane protein segment. The Periplasmic segment spans residues 29–168 (MRGTIVFFRS…SGEKPALRQQ (140 aa)). Positions 122 and 126 each coordinate heme. Residues 134–168 (ALKKQGHWQGEAKHPGGTAPAPQTASGEKPALRQQ) are disordered.

It belongs to the CcmE/CycJ family.

It localises to the cell inner membrane. Heme chaperone required for the biogenesis of c-type cytochromes. Transiently binds heme delivered by CcmC and transfers the heme to apo-cytochromes in a process facilitated by CcmF and CcmH. The protein is Cytochrome c-type biogenesis protein CcmE of Methylobacterium nodulans (strain LMG 21967 / CNCM I-2342 / ORS 2060).